A 122-amino-acid chain; its full sequence is Large ribosomal subunit protein uL14 (122 aa).

Belongs to the universal ribosomal protein uL14 family. In terms of assembly, part of the 50S ribosomal subunit. Forms a cluster with proteins L3 and L19. In the 70S ribosome, L14 and L19 interact and together make contacts with the 16S rRNA in bridges B5 and B8.

In terms of biological role, binds to 23S rRNA. Forms part of two intersubunit bridges in the 70S ribosome. The protein is Large ribosomal subunit protein uL14 of Fusobacterium nucleatum subsp. nucleatum (strain ATCC 25586 / DSM 15643 / BCRC 10681 / CIP 101130 / JCM 8532 / KCTC 2640 / LMG 13131 / VPI 4355).